The following is a 271-amino-acid chain: Urease accessory protein UreD (271 aa).

The protein belongs to the UreD family. UreD, UreF and UreG form a complex that acts as a GTP-hydrolysis-dependent molecular chaperone, activating the urease apoprotein by helping to assemble the nickel containing metallocenter of UreC. The UreE protein probably delivers the nickel.

It is found in the cytoplasm. In terms of biological role, required for maturation of urease via the functional incorporation of the urease nickel metallocenter. This is Urease accessory protein UreD from Haemophilus influenzae (strain PittEE).